A 328-amino-acid chain; its full sequence is CCAAT/enhancer-binding protein beta (328 aa).

Arg-3 carries the asymmetric dimethylarginine; by CARM1 modification. N6-methylated lysine is present on Lys-39. A disordered region spans residues 165-274 (DSCKGPRKEE…NIAVRKSRDK (110 aa)). The span at 200–231 (SVPSGSSGNLSTSSSSSPPGTPNPSESSKSAA) shows a compositional bias: low complexity. A Phosphothreonine; by RPS6KA1, CDK2 and MAPK modification is found at Thr-220. Positions 248-264 (KCVDKHSDEYKLRRERN) are enriched in basic and acidic residues. One can recognise a bZIP domain in the interval 254–317 (SDEYKLRRER…STLRNLFKQL (64 aa)). The segment at 258–278 (KLRRERNNIAVRKSRDKAKMR) is basic motif. The leucine-zipper stretch occupies residues 280 to 287 (LETQHKVL).

It belongs to the bZIP family. C/EBP subfamily. Binds DNA as a dimer. Interacts (not methylated) with MED23, MED26, SMARCA2, SMARCB1 and SMARCC1. Post-translationally, methylated. Methylation at Arg-3 by CARM1 and at Lys-39 by EHMT2, inhibit transactivation activity. Methylation is probably inhibited by phosphorylation at Thr-220. As to expression, specifically expressed in myelomoncytic cells.

It is found in the nucleus. Functionally, important transcriptional activator regulating the expression of genes involved in immune and inflammatory responses. Binds to regulatory regions of several acute-phase and cytokines genes and probably plays a role in the regulation of acute-phase reaction, inflammation and hemopoiesis. The consensus recognition site is 5'-T[TG]NNGNAA[TG]-3'. Functions in brown adipose tissue (BAT) differentiation. Regulates the transcriptional induction of peroxisome proliferator-activated receptor gamma (PPARG). Binds to the MGF and MIM-1 promoters and activates the transcription of these genes. Important transcription factor regulating the expression of genes involved in immune and inflammatory responses. Also plays a significant role in adipogenesis, as well as in the gluconeogenic pathway, liver regeneration, and hematopoiesis. The consensus recognition site is 5'-T[TG]NNGNAA[TG]-3'. Its functional capacity is governed by protein interactions and post-translational protein modifications. This is CCAAT/enhancer-binding protein beta (CEBPB) from Gallus gallus (Chicken).